A 195-amino-acid polypeptide reads, in one-letter code: Imidazoleglycerol-phosphate dehydratase (195 aa).

It belongs to the imidazoleglycerol-phosphate dehydratase family.

The protein localises to the cytoplasm. It carries out the reaction D-erythro-1-(imidazol-4-yl)glycerol 3-phosphate = 3-(imidazol-4-yl)-2-oxopropyl phosphate + H2O. Its pathway is amino-acid biosynthesis; L-histidine biosynthesis; L-histidine from 5-phospho-alpha-D-ribose 1-diphosphate: step 6/9. This is Imidazoleglycerol-phosphate dehydratase from Paracoccus denitrificans (strain Pd 1222).